The following is a 443-amino-acid chain: Methyl-coenzyme M reductase II subunit beta (443 aa).

Y367 lines the coenzyme M pocket. G369 serves as a coordination point for coenzyme B.

This sequence belongs to the methyl-coenzyme M reductase beta subunit family. In terms of assembly, MCR is a hexamer of two alpha, two beta, and two gamma chains, forming a dimer of heterotrimers. Coenzyme F430 serves as cofactor.

The catalysed reaction is coenzyme B + methyl-coenzyme M = methane + coenzyme M-coenzyme B heterodisulfide. It functions in the pathway one-carbon metabolism; methyl-coenzyme M reduction; methane from methyl-coenzyme M: step 1/1. Its function is as follows. Component of the methyl-coenzyme M reductase (MCR) I that catalyzes the reductive cleavage of methyl-coenzyme M (CoM-S-CH3 or 2-(methylthio)ethanesulfonate) using coenzyme B (CoB or 7-mercaptoheptanoylthreonine phosphate) as reductant which results in the production of methane and the mixed heterodisulfide of CoB and CoM (CoM-S-S-CoB). This is the final step in methanogenesis. The chain is Methyl-coenzyme M reductase II subunit beta (mrtB) from Methanothermus fervidus (strain ATCC 43054 / DSM 2088 / JCM 10308 / V24 S).